The sequence spans 132 residues: Ribosome-binding factor A (132 aa).

It belongs to the RbfA family. In terms of assembly, monomer. Binds 30S ribosomal subunits, but not 50S ribosomal subunits or 70S ribosomes.

Its subcellular location is the cytoplasm. In terms of biological role, one of several proteins that assist in the late maturation steps of the functional core of the 30S ribosomal subunit. Associates with free 30S ribosomal subunits (but not with 30S subunits that are part of 70S ribosomes or polysomes). Required for efficient processing of 16S rRNA. May interact with the 5'-terminal helix region of 16S rRNA. In Pasteurella multocida (strain Pm70), this protein is Ribosome-binding factor A.